Here is a 567-residue protein sequence, read N- to C-terminus: Urease subunit alpha (567 aa).

The Urease domain occupies 129–567; the sequence is GGIDSHIHFI…LPMAQRYFLF (439 aa). Ni(2+) is bound by residues His134, His136, and Lys217. Residue Lys217 is modified to N6-carboxylysine. Residue His219 coordinates substrate. His246 and His272 together coordinate Ni(2+). The active-site Proton donor is the His320. Residue Asp360 coordinates Ni(2+).

Belongs to the metallo-dependent hydrolases superfamily. Urease alpha subunit family. Heterotrimer of UreA (gamma), UreB (beta) and UreC (alpha) subunits. Three heterotrimers associate to form the active enzyme. Ni cation serves as cofactor. Post-translationally, carboxylation allows a single lysine to coordinate two nickel ions.

It localises to the cytoplasm. The enzyme catalyses urea + 2 H2O + H(+) = hydrogencarbonate + 2 NH4(+). It functions in the pathway nitrogen metabolism; urea degradation; CO(2) and NH(3) from urea (urease route): step 1/1. The polypeptide is Urease subunit alpha (Alcanivorax borkumensis (strain ATCC 700651 / DSM 11573 / NCIMB 13689 / SK2)).